We begin with the raw amino-acid sequence, 77 residues long: SS18-like protein 2 (77 aa).

The SH2-binding motif lies at 50-53 (YQHV).

It belongs to the SS18 family.

The polypeptide is SS18-like protein 2 (SS18L2) (Homo sapiens (Human)).